The primary structure comprises 372 residues: DNA replication and repair protein RecF (372 aa).

30-37 (GENGQGKT) is a binding site for ATP.

Belongs to the RecF family.

The protein localises to the cytoplasm. In terms of biological role, the RecF protein is involved in DNA metabolism; it is required for DNA replication and normal SOS inducibility. RecF binds preferentially to single-stranded, linear DNA. It also seems to bind ATP. The protein is DNA replication and repair protein RecF of Anaeromyxobacter sp. (strain K).